The chain runs to 1382 residues: ATP-dependent RNA helicase TDRD9 (1382 aa).

A disordered region spans residues 36–62; sequence AAREEVQRQDVAPGAGPAAQAPALAQA. The segment covering 47–62 has biased composition (low complexity); that stretch reads APGAGPAAQAPALAQA. Residues 142 to 308 form the Helicase ATP-binding domain; that stretch reads VSLIESNSVV…FAVPVQNKMN (167 aa). 155–162 lines the ATP pocket; it reads GATGSGKS. The DEAH box motif lies at 254–257; that stretch reads DEVH. A Helicase C-terminal domain is found at 377 to 544; it reads SGAQFVLERS…ILKVKLLDMG (168 aa). Residues 944 to 1004 enclose the Tudor domain; the sequence is HPHPDLVCLA…MEIPCQFLEL (61 aa).

Belongs to the DEAD box helicase family. DEAH subfamily. Interacts with piRNA-associated proteins PIWIL1 and PIWIL4.

The protein resides in the cytoplasm. The protein localises to the nucleus. The enzyme catalyses ATP + H2O = ADP + phosphate + H(+). Functionally, ATP-binding RNA helicase required during spermatogenesis. Required to repress transposable elements and prevent their mobilization, which is essential for the germline integrity. Acts via the piRNA metabolic process, which mediates the repression of transposable elements during meiosis by forming complexes composed of piRNAs and Piwi proteins and governs the methylation and subsequent repression of transposons. Acts downstream of piRNA biogenesis: exclusively required for transposon silencing in the nucleus, suggesting that it acts as a nuclear effector in the nucleus together with PIWIL4. The polypeptide is ATP-dependent RNA helicase TDRD9 (Homo sapiens (Human)).